A 723-amino-acid polypeptide reads, in one-letter code: Peroxisomal bifunctional enzyme (723 aa).

Positions 1–282 (MAEYTRLHNA…FAERKANKWS (282 aa)) are enoyl-CoA hydratase / isomerase. The residue at position 38 (K38) is an N6-succinyllysine. G101 contributes to the substrate binding site. The residue at position 165 (K165) is an N6-acetyllysine; alternate. K165 carries the post-translational modification N6-succinyllysine; alternate. N6-acetyllysine is present on K171. The residue at position 219 (K219) is an N6-acetyllysine; alternate. An N6-succinyllysine; alternate modification is found at K219. N6-acetyllysine is present on K250. 2 positions are modified to N6-succinyllysine: K280 and K290. Residues 283–572 (TPSGASWKTA…DVLCELGRFG (290 aa)) are 3-hydroxyacyl-CoA dehydrogenase. N6-acetyllysine occurs at positions 346, 350, and 464. K532 carries the post-translational modification N6-succinyllysine. T548 bears the Phosphothreonine mark. K577 is subject to N6-succinyllysine. N6-acetyllysine; alternate occurs at positions 584, 591, and 710. An N6-succinyllysine; alternate mark is found at K584, K591, and K710. Phosphoserine is present on S718. Positions 721 to 723 (SKL) match the Microbody targeting signal motif. K722 carries the post-translational modification N6-succinyllysine.

This sequence in the N-terminal section; belongs to the enoyl-CoA hydratase/isomerase family. The protein in the C-terminal section; belongs to the 3-hydroxyacyl-CoA dehydrogenase family. As to quaternary structure, monomer. In terms of processing, acetylated, leading to enhanced enzyme activity. Acetylation is enhanced by up to 80% after treatment either with trichostin A (TSA) or with nicotinamide (NAM) with highest increase on Lys-346. Acetylation and enzyme activity increased by about 1.5% on addition of fatty acids. In terms of tissue distribution, liver and kidney. Strongly expressed in the terminal segments of the proximal tubule. Lower amounts seen in the brain.

The protein resides in the peroxisome. It catalyses the reaction a (3S)-3-hydroxyacyl-CoA = a (2E)-enoyl-CoA + H2O. The catalysed reaction is a 4-saturated-(3S)-3-hydroxyacyl-CoA = a (3E)-enoyl-CoA + H2O. It carries out the reaction a (3Z)-enoyl-CoA = a 4-saturated (2E)-enoyl-CoA. The enzyme catalyses a (3E)-enoyl-CoA = a 4-saturated (2E)-enoyl-CoA. It catalyses the reaction a (3S)-3-hydroxyacyl-CoA + NAD(+) = a 3-oxoacyl-CoA + NADH + H(+). The catalysed reaction is (2S,3S)-3-hydroxy-2-methylbutanoyl-CoA = (2E)-2-methylbut-2-enoyl-CoA + H2O. It carries out the reaction (3S)-hydroxyhexadecanoyl-CoA + NAD(+) = 3-oxohexadecanoyl-CoA + NADH + H(+). The enzyme catalyses (3S)-hydroxyhexadecanoyl-CoA = (2E)-hexadecenoyl-CoA + H2O. It catalyses the reaction (2E)-hexadecenedioyl-CoA + H2O = (3S)-hydroxyhexadecanedioyl-CoA. The catalysed reaction is (3S)-hydroxyhexadecanedioyl-CoA + NAD(+) = 3-oxohexadecanedioyl-CoA + NADH + H(+). It carries out the reaction (3E,5Z)-tetradecadienoyl-CoA = (2E,5Z)-tetradecadienoyl-CoA. The enzyme catalyses (3E,5Z)-octadienoyl-CoA = (2E,5Z)-octadienoyl-CoA. It catalyses the reaction (3S)-hydroxydecanoyl-CoA + NAD(+) = 3-oxodecanoyl-CoA + NADH + H(+). The catalysed reaction is (3E)-decenoyl-CoA = (2E)-decenoyl-CoA. It carries out the reaction (3Z)-hexenoyl-CoA = (2E)-hexenoyl-CoA. The enzyme catalyses (3E)-hexenoyl-CoA = (2E)-hexenoyl-CoA. It catalyses the reaction (3S)-hydroxydecanoyl-CoA = (2E)-decenoyl-CoA + H2O. The catalysed reaction is (3S)-hydroxyhexanoyl-CoA = (2E)-hexenoyl-CoA + H2O. The protein operates within lipid metabolism; fatty acid beta-oxidation. Enzyme activity enhanced by acetylation. Functionally, peroxisomal trifunctional enzyme possessing 2-enoyl-CoA hydratase, 3-hydroxyacyl-CoA dehydrogenase, and delta 3, delta 2-enoyl-CoA isomerase activities. Catalyzes two of the four reactions of the long chain fatty acids peroxisomal beta-oxidation pathway. Can also use branched-chain fatty acids such as 2-methyl-2E-butenoyl-CoA as a substrate, which is hydrated into (2S,3S)-3-hydroxy-2-methylbutanoyl-CoA. Optimal isomerase for 2,5 double bonds into 3,5 form isomerization in a range of enoyl-CoA species. Also able to isomerize both 3-cis and 3-trans double bonds into the 2-trans form in a range of enoyl-CoA species. With HSD17B4, catalyzes the hydration of trans-2-enoyl-CoA and the dehydrogenation of 3-hydroxyacyl-CoA, but with opposite chiral specificity. Regulates the amount of medium-chain dicarboxylic fatty acids which are essential regulators of all fatty acid oxidation pathways. Also involved in the degradation of long-chain dicarboxylic acids through peroxisomal beta-oxidation. The polypeptide is Peroxisomal bifunctional enzyme (Homo sapiens (Human)).